The chain runs to 607 residues: Vacuolar fusion protein MON1 homolog (607 aa).

The span at 1–14 (MATSDSRSSPSSSD) shows a compositional bias: low complexity. Disordered regions lie at residues 1-173 (MATS…DDAS) and 463-486 (PIDR…DISV). Residues 21-55 (NPSSDPETNSERVQSQLESMNLSQPSEVSDGSHTE) are compositionally biased toward polar residues.

It belongs to the MON1/SAND family. Interacts with CCZ1A, CCZ1B and RABF2B. In terms of tissue distribution, widely expressed at stable levels.

It localises to the endosome. The protein resides in the prevacuolar compartment. In terms of biological role, plays an important role in membrane trafficking through the secretory apparatus. In complex with CCZ1, acts as a guanine exchange factor (GEF) for RABG3F of the Rab7 protein family. Promotes the exchange of GDP to GTP, converting RABG3F from an inactive GDP-bound form into an active GTP-bound form. The RABG3F active form is involved in protein trafficking from prevacuolar compartments (PVCs) to vacuoles. May serve as a linker between Rab5 and Rab7 protein families in PVCs and mediate PVC maturation. In Arabidopsis thaliana (Mouse-ear cress), this protein is Vacuolar fusion protein MON1 homolog.